The primary structure comprises 556 residues: Formate--tetrahydrofolate ligase (556 aa).

Position 64–71 (64–71) interacts with ATP; the sequence is TPAGEGKT.

This sequence belongs to the formate--tetrahydrofolate ligase family.

The enzyme catalyses (6S)-5,6,7,8-tetrahydrofolate + formate + ATP = (6R)-10-formyltetrahydrofolate + ADP + phosphate. It participates in one-carbon metabolism; tetrahydrofolate interconversion. This chain is Formate--tetrahydrofolate ligase, found in Actinobacillus pleuropneumoniae serotype 5b (strain L20).